We begin with the raw amino-acid sequence, 75 residues long: Large ribosomal subunit protein uL30 (75 aa).

Belongs to the universal ribosomal protein uL30 family. Part of the 50S ribosomal subunit.

In Roseiflexus castenholzii (strain DSM 13941 / HLO8), this protein is Large ribosomal subunit protein uL30.